Reading from the N-terminus, the 481-residue chain is Aspartyl/glutamyl-tRNA(Asn/Gln) amidotransferase subunit B (481 aa).

Belongs to the GatB/GatE family. GatB subfamily. In terms of assembly, heterotrimer of A, B and C subunits.

It carries out the reaction L-glutamyl-tRNA(Gln) + L-glutamine + ATP + H2O = L-glutaminyl-tRNA(Gln) + L-glutamate + ADP + phosphate + H(+). It catalyses the reaction L-aspartyl-tRNA(Asn) + L-glutamine + ATP + H2O = L-asparaginyl-tRNA(Asn) + L-glutamate + ADP + phosphate + 2 H(+). Allows the formation of correctly charged Asn-tRNA(Asn) or Gln-tRNA(Gln) through the transamidation of misacylated Asp-tRNA(Asn) or Glu-tRNA(Gln) in organisms which lack either or both of asparaginyl-tRNA or glutaminyl-tRNA synthetases. The reaction takes place in the presence of glutamine and ATP through an activated phospho-Asp-tRNA(Asn) or phospho-Glu-tRNA(Gln). This Ehrlichia chaffeensis (strain ATCC CRL-10679 / Arkansas) protein is Aspartyl/glutamyl-tRNA(Asn/Gln) amidotransferase subunit B.